The following is a 164-amino-acid chain: UPF0114 protein YqhA (164 aa).

The next 3 membrane-spanning stretches (helical) occupy residues 15 to 35 (LLAPVYFGLSLALIALALKFF), 53 to 73 (LILVLLSLVDMTLVGGLLVMV), and 136 to 156 (LMWYVIIHLTFVLSAFVMGYL).

Belongs to the UPF0114 family.

It is found in the cell membrane. This Escherichia coli O6:H1 (strain CFT073 / ATCC 700928 / UPEC) protein is UPF0114 protein YqhA.